A 148-amino-acid chain; its full sequence is Large ribosomal subunit protein uL13 (148 aa).

The interval 128–148 (PEHPHQAQNPQPFEINAKVEK) is disordered.

This sequence belongs to the universal ribosomal protein uL13 family. In terms of assembly, part of the 50S ribosomal subunit.

Functionally, this protein is one of the early assembly proteins of the 50S ribosomal subunit, although it is not seen to bind rRNA by itself. It is important during the early stages of 50S assembly. The chain is Large ribosomal subunit protein uL13 from Saccharopolyspora erythraea (strain ATCC 11635 / DSM 40517 / JCM 4748 / NBRC 13426 / NCIMB 8594 / NRRL 2338).